Consider the following 254-residue polypeptide: Tabinhibitin 6 (254 aa).

The N-terminal stretch at 1 to 22 (MLPYWCPLLLAALVLQYATIDA) is a signal peptide. The short motif at 31-33 (RGD) is the Cell attachment site element. The region spanning 66 to 210 (LSKINDVRDH…KARALLTCNF (145 aa)) is the SCP domain.

This sequence belongs to the CRISP family. Expressed in salivary glands.

It localises to the secreted. Functionally, inhibits platelet aggregation induced by all agonists tested (ADP, arachidonic acid, the thromboxane A2 analog U46619, thrombin, and snake venom snaclecs (TMVA that activates platelet through GPIB, and stejnulxin that specifically acts through GPVI (GP6))). May act by competing with fibrinogen for binding to glycoprotein IIb/IIIa (ITGA2B/ITGB3). In Tabanus yao (Horsefly), this protein is Tabinhibitin 6.